Here is a 319-residue protein sequence, read N- to C-terminus: Ataxin-3 homolog (319 aa).

In terms of domain architecture, Josephin spans 8–179 (ISSIFFERQQ…NSEADDFITL (172 aa)). Cys-21 serves as the catalytic Nucleophile. The active-site Proton acceptor is His-118. Residue Asn-133 is part of the active site. 2 consecutive UIM domains span residues 218–237 (QEDR…KESS) and 242–261 (SDED…DPNI). The disordered stretch occupies residues 253–319 (MSLSQDPNIP…EKKSQNVPEE (67 aa)). The span at 254 to 267 (SLSQDPNIPSTSAA) shows a compositional bias: polar residues. The segment covering 295-313 (QQRRDRAKFLEKLEEEKKS) has biased composition (basic and acidic residues). Positions 297 to 300 (RRDR) are interaction with cdc-48.1 and cdc-48.2.

In terms of assembly, forms a complex composed of deubiquitinating enzyme atx-3, adapter ubxn-5 and cdc-48.1. Forms a complex composed of deubiquitinating enzyme atx-3, E4 ubiquitin-protein ligase ufd-2 and cdc-48.1. Interacts (via RRDR motif) with cdc-48.1 (via N-terminus) and cdc-48.2 (via N-terminus); the interaction with cdc-48.1 is not required for atx-3 enzymatic activity. Interacts (via C-terminus) with ubxn-5. May interact with ned-8.

The protein resides in the cytoplasm. It localises to the nucleus. Its subcellular location is the nucleolus. It carries out the reaction Thiol-dependent hydrolysis of ester, thioester, amide, peptide and isopeptide bonds formed by the C-terminal Gly of ubiquitin (a 76-residue protein attached to proteins as an intracellular targeting signal).. In terms of biological role, acts as a chain editing deubiquitinating enzyme that binds and cleaves 'Lys-48'-linked polyubiquitin chains, with a preference for chains containing four or more ubiquitin molecules thereby modulating protein degradation by the ubiquitin-proteasome pathway. Probably by regulating the IGF-1-insulin-like pathway, regulates lifespan. Regulates germline DNA double-strand-break repair and apoptosis in response to DNA damage by recruiting E4 ubiquitin-protein ligase ufd-2 to DNA repair foci. Interacts with key regulators of transcription and represses transcription. Acts as a histone-binding protein that regulates transcription. This Caenorhabditis briggsae protein is Ataxin-3 homolog.